The primary structure comprises 193 residues: Ribosomal RNA large subunit methyltransferase E (193 aa).

S-adenosyl-L-methionine-binding residues include Gly51, Trp53, Asp69, Asp85, and Asp108. Residue Lys148 is the Proton acceptor of the active site.

It belongs to the class I-like SAM-binding methyltransferase superfamily. RNA methyltransferase RlmE family.

The protein localises to the cytoplasm. It carries out the reaction uridine(2552) in 23S rRNA + S-adenosyl-L-methionine = 2'-O-methyluridine(2552) in 23S rRNA + S-adenosyl-L-homocysteine + H(+). Functionally, specifically methylates the uridine in position 2552 of 23S rRNA at the 2'-O position of the ribose in the fully assembled 50S ribosomal subunit. This is Ribosomal RNA large subunit methyltransferase E from Methanoregula boonei (strain DSM 21154 / JCM 14090 / 6A8).